A 199-amino-acid polypeptide reads, in one-letter code: Secreted chorismate mutase (199 aa).

The N-terminal stretch at 1 to 33 (MLTRPREIYLATAVSIGILLSLIAPLGPPLARA) is a signal peptide. A Chorismate mutase domain is found at 34–113 (DGTSQLAELV…ATEAIEYSRF (80 aa)). Substrate is bound by residues arginine 49, lysine 60, aspartate 69, 72–76 (RVEQQ), 105–109 (TEAIE), and arginine 134. Cysteine 160 and cysteine 193 form a disulfide bridge.

Homodimer.

It is found in the secreted. It carries out the reaction chorismate = prephenate. The protein operates within metabolic intermediate biosynthesis; prephenate biosynthesis; prephenate from chorismate: step 1/1. With respect to regulation, tyrosine, phenylalanine, and tryptophan moderately enhance chorismate mutase activity at low concentrations, but allosterically inhibit the enzyme at higher concentrations. Functionally, catalyzes the Claisen rearrangement of chorismate to prephenate. May play some role in the pathogenicity. This chain is Secreted chorismate mutase, found in Mycobacterium tuberculosis (strain ATCC 25618 / H37Rv).